The following is a 124-amino-acid chain: Small ribosomal subunit protein uS12 (124 aa).

The tract at residues 1 to 24 (MPTINQLVRQGRKKSVKKTNTPAL) is disordered. 3-methylthioaspartic acid is present on Asp89.

Belongs to the universal ribosomal protein uS12 family. In terms of assembly, part of the 30S ribosomal subunit. Contacts proteins S8 and S17. May interact with IF1 in the 30S initiation complex.

Functionally, with S4 and S5 plays an important role in translational accuracy. Interacts with and stabilizes bases of the 16S rRNA that are involved in tRNA selection in the A site and with the mRNA backbone. Located at the interface of the 30S and 50S subunits, it traverses the body of the 30S subunit contacting proteins on the other side and probably holding the rRNA structure together. The combined cluster of proteins S8, S12 and S17 appears to hold together the shoulder and platform of the 30S subunit. The chain is Small ribosomal subunit protein uS12 from Desulfotalea psychrophila (strain LSv54 / DSM 12343).